The following is a 370-amino-acid chain: MRVGLVGWRGMVGSVLMQRMVEERDFDLIEPVFFSTSQIGVPAPNFGKDAGMLHDAFDIESLKQLDAVITCQGGSYTEKVYPALRQAGWKGYWIDAASTLRMDKEAIITLDPVNLKQILHGIHHGTKTFVGGNCTVSLMLMALGGLYERGLVEWMSAMTYQAASGAGAQNMRELISQMGVINDAVSSELANPASSILDIDKKVAETMRSGSFPTDNFGVPLAGSLIPWIDVKRDNGQSKEEWKAGVEANKILGLQDSPVPIDGTCVRIGAMRCHSQALTIKLKQNIPLDEIEEMIATHNDWVKVIPNERDITARELTPAKVTGTLSVPVGRLRKMAMGDDFLNAFTVGDQLLWGAAEPLRRTLRIILAEK.

NADP(+) is bound by residues 9-12 (RGMV), 36-37 (TS), and Gln-72. Arg-101 serves as a coordination point for phosphate. The Acyl-thioester intermediate role is filled by Cys-134. Cys-134 is subject to S-cysteinyl cysteine; in inhibited form. Position 161 (Gln-161) interacts with substrate. Residues 164–165 (SG) and Pro-192 each bind NADP(+). Residue Glu-240 participates in substrate binding. Lys-243 is a binding site for phosphate. Arg-267 is a binding site for substrate. His-274 serves as the catalytic Proton acceptor. Gln-350 is a binding site for NADP(+).

The protein belongs to the aspartate-semialdehyde dehydrogenase family. Homodimer.

The catalysed reaction is L-aspartate 4-semialdehyde + phosphate + NADP(+) = 4-phospho-L-aspartate + NADPH + H(+). It participates in amino-acid biosynthesis; L-lysine biosynthesis via DAP pathway; (S)-tetrahydrodipicolinate from L-aspartate: step 2/4. It functions in the pathway amino-acid biosynthesis; L-methionine biosynthesis via de novo pathway; L-homoserine from L-aspartate: step 2/3. The protein operates within amino-acid biosynthesis; L-threonine biosynthesis; L-threonine from L-aspartate: step 2/5. Its activity is regulated as follows. Inhibited by S-methyl-L-cysteine sulfoxide in vitro, via the formation of a covalently bound cysteine at the active site Cys-134. Its function is as follows. Catalyzes the NADPH-dependent formation of L-aspartate-semialdehyde (L-ASA) by the reductive dephosphorylation of L-aspartyl-4-phosphate. The sequence is that of Aspartate-semialdehyde dehydrogenase 1 (asd1) from Vibrio cholerae serotype O1 (strain ATCC 39315 / El Tor Inaba N16961).